Reading from the N-terminus, the 443-residue chain is Xaa-Pro dipeptidase (443 aa).

Aspartate 246, aspartate 257, histidine 339, glutamate 384, and glutamate 423 together coordinate Mn(2+).

It belongs to the peptidase M24B family. Bacterial-type prolidase subfamily. Mn(2+) is required as a cofactor.

The enzyme catalyses Xaa-L-Pro dipeptide + H2O = an L-alpha-amino acid + L-proline. Splits dipeptides with a prolyl residue in the C-terminal position. This is Xaa-Pro dipeptidase from Salmonella arizonae (strain ATCC BAA-731 / CDC346-86 / RSK2980).